The chain runs to 157 residues: Type II restriction enzyme PvuII (157 aa).

Residues Asp-58 and Glu-68 each contribute to the Mg(2+) site.

Homodimer. It depends on Mg(2+) as a cofactor.

The enzyme catalyses Endonucleolytic cleavage of DNA to give specific double-stranded fragments with terminal 5'-phosphates.. A P subtype restriction enzyme that recognizes the double-stranded sequence 5'-CAGCTG-3' and cleaves after G-3. The sequence is that of Type II restriction enzyme PvuII (pvuIIR) from Proteus hauseri.